We begin with the raw amino-acid sequence, 338 residues long: MQTATSIILETLATGMDLAPELAEAGFSRLMDGEMTCAQAGSFLMGLRMKGETPQELTEAVRAALARAVRVTGIDGPTIDIVGTGGDGRSSFNCSTATALTLAGMGHRVVKHGNRAVSSSCGAADAVEGLGLPLELDPEDVRALVAQRNFAFLFAPRFHPAFRNVMPIRRELGVRTLFNLLGPLLNPARPSHMLLGVARAELLPLMARTLLLTGVRRAAVVHGAGGYDELTPMGPAHIMLLEGDGQGHGTLTEISVDPADYGIASCTPEELAVPDRDTAVRVLRELLSGGGPAPMRDMLMLNVGMALHLLEPGLALPDAMAAARLALAAGAGGKVLHA.

5-phospho-alpha-D-ribose 1-diphosphate contacts are provided by residues Gly-83, 86–87 (GD), Ser-91, 93–96 (NCST), 111–119 (KHGNRAVSS), and Ala-123. Gly-83 provides a ligand contact to anthranilate. Residue Ser-95 participates in Mg(2+) binding. Position 114 (Asn-114) interacts with anthranilate. Arg-169 lines the anthranilate pocket. Mg(2+) is bound by residues Asp-228 and Glu-229.

It belongs to the anthranilate phosphoribosyltransferase family. As to quaternary structure, homodimer. Mg(2+) is required as a cofactor.

It carries out the reaction N-(5-phospho-beta-D-ribosyl)anthranilate + diphosphate = 5-phospho-alpha-D-ribose 1-diphosphate + anthranilate. It functions in the pathway amino-acid biosynthesis; L-tryptophan biosynthesis; L-tryptophan from chorismate: step 2/5. Its function is as follows. Catalyzes the transfer of the phosphoribosyl group of 5-phosphorylribose-1-pyrophosphate (PRPP) to anthranilate to yield N-(5'-phosphoribosyl)-anthranilate (PRA). In Nitratidesulfovibrio vulgaris (strain DSM 19637 / Miyazaki F) (Desulfovibrio vulgaris), this protein is Anthranilate phosphoribosyltransferase.